Here is a 90-residue protein sequence, read N- to C-terminus: Probable Fe(2+)-trafficking protein (90 aa).

Belongs to the Fe(2+)-trafficking protein family.

Its function is as follows. Could be a mediator in iron transactions between iron acquisition and iron-requiring processes, such as synthesis and/or repair of Fe-S clusters in biosynthetic enzymes. This is Probable Fe(2+)-trafficking protein from Pseudoalteromonas atlantica (strain T6c / ATCC BAA-1087).